Reading from the N-terminus, the 707-residue chain is MNGGGRRRYSSEQLMFDVPANAGGGAGKWGQRGGVRRGDGEIFVSVEPTTPARLRGGEAAAAAAGESPGQRQQLSPGLLDLHAFDTELISDFQVPGIGMYDGAQKFGYGNGGFDDSDPTFAPNKQMSKSTVFAESNFLKAFPEKEKAAPVAKIKVVVRKRPLNKKEISKKEEDIIDIEQQSNSLTVHETKLKVDLTEYVEKHEFVFDAVLDEDVSNDEVYRETVEPVVPAIFNRTKATCFAYGQTGSGKTYTMRPLPLKASQDILRLMHHTYRNQGYQLFVSFFEIYGGKLFDLLNERSKLCMREDGKQKVCIVGLQEYRVSDVETIKELIEKGNATRSTGTTGANEESSRSHAILQLAIKKRVDGNDSKPPRLAGKLSFIDLAGSERGADTTDNDKQTRIEGAEINKSLLALKECIRALDNDQTHIPFRGSKLTEVLRDSFIGDSRTVMISCISPSSGSCEHTLNTLRYADRVKSLSKGSNTKKDLSLAAAPLRESSPSLLASAVPSFSSAEVMNDITERSNFGWTKQQYVKEHQAPTFVDRMQKVKEDTEFSLSNGGYFKEQRTKGSVPVGIAEVPDTVYQQGRQPTRKARDLTSDNNMRNSIAYPIIRRVVPDEDEHLNELLQEEEDLVSAHRKQVEETLDMIKEEMNLLVEADQPGNQLDDYITRLSGILSQKAAGIVDLQARLAQFQRRLNENNVLLYAQCP.

The Kinesin motor domain maps to 152–477 (KIKVVVRKRP…LRYADRVKSL (326 aa)). 243 to 250 (GQTGSGKT) provides a ligand contact to ATP. Residues 619–656 (EHLNELLQEEEDLVSAHRKQVEETLDMIKEEMNLLVEA) are a coiled coil.

It belongs to the TRAFAC class myosin-kinesin ATPase superfamily. Kinesin family. KIN-13 subfamily.

The sequence is that of Kinesin-like protein KIN-13B from Oryza sativa subsp. japonica (Rice).